A 243-amino-acid chain; its full sequence is MRKPVIAGNWKMHMTCAQARAWIGTFLPLIAELPNDRHLVVAPPFTAISTLAELSEGTRLELSSQNVHWEGEGAYTAEISPSMLKEHNVQYAIVGHSEPRKYFSESDEQINHRARSAQTNGLIPIVCVGESDEQRSRGEAERVIRRQVEQGLEGLDPSQLVVAYEPIWAIGTGKTCEASEANRICGLIRSWVGSPDLIIQYGGSVKPGNIDQLMGMSDIDGVLVGGASLDPEGFGRIANYVKS.

9–11 (NWK) contributes to the substrate binding site. His-96 acts as the Electrophile in catalysis. Catalysis depends on Glu-165, which acts as the Proton acceptor. Substrate-binding positions include Gly-171, Ser-204, and 225 to 226 (GG).

The protein belongs to the triosephosphate isomerase family. As to quaternary structure, homodimer.

Its subcellular location is the cytoplasm. It carries out the reaction D-glyceraldehyde 3-phosphate = dihydroxyacetone phosphate. It functions in the pathway carbohydrate biosynthesis; gluconeogenesis. Its pathway is carbohydrate degradation; glycolysis; D-glyceraldehyde 3-phosphate from glycerone phosphate: step 1/1. In terms of biological role, involved in the gluconeogenesis. Catalyzes stereospecifically the conversion of dihydroxyacetone phosphate (DHAP) to D-glyceraldehyde-3-phosphate (G3P). In Synechococcus sp. (strain CC9311), this protein is Triosephosphate isomerase.